The following is a 119-amino-acid chain: Beta-2-microglobulin (119 aa).

The signal sequence occupies residues 1-20; that stretch reads MVCSVVVALLALLSLSGLEA. Residues 25–114 form the Ig-like C1-type domain; the sequence is PKIQVYSRHP…VTFSTPKTVK (90 aa). A disulfide bond links C45 and C100.

It belongs to the beta-2-microglobulin family. Heterodimer of an alpha chain and a beta chain. Beta-2-microglobulin is the beta-chain of major histocompatibility complex class I molecules.

It localises to the secreted. In terms of biological role, component of the class I major histocompatibility complex (MHC). Involved in the presentation of peptide antigens to the immune system. The sequence is that of Beta-2-microglobulin (B2M) from Cebuella pygmaea (Pygmy marmoset).